Consider the following 2275-residue polypeptide: Serine-rich adhesin for platelets (2275 aa).

The first 89 residues, 1–89 (MSKRQKEFHD…VNMLHDQQAF (89 aa)), serve as a signal peptide directing secretion. The serine-rich repeat region 1, SRR1 stretch occupies residues 90 to 230 (AASDAPLTSE…KTSTTSTSTA (141 aa)). The span at 100 to 111 (LNTQSETVGNQN) shows a compositional bias: polar residues. Disordered regions lie at residues 100-229 (LNTQ…STST) and 751-2247 (NSMS…GLLG). Over residues 112–128 (STTIEASTSTADSTSVT) the composition is skewed to low complexity. Residues 129-140 (KNSSSVQTSNSD) show a composition bias toward polar residues. The span at 150-229 (VTSTTNSTSN…NKTSTTSTST (80 aa)) shows a compositional bias: low complexity. The tract at residues 231–751 (PVKLRTFSRL…TTFKYEVTRN (521 aa)) is non-repeat region (NRR). Low complexity-rich tracts occupy residues 752 to 1392 (SMSD…LSLS) and 1402 to 2218 (SNSA…ATSE). The interval 752–2236 (SMSDSVSTSG…AQSEKRLPDT (1485 aa)) is serine-rich repeat region 2, SRR2. The LPXTG sorting signal signature appears at 2233-2237 (LPDTG). Thr2236 is subject to Pentaglycyl murein peptidoglycan amidated threonine. Positions 2237-2275 (GDSIKQNGLLGGVMTLLVGLGLMKRKKKKDENDQDDSQA) are cleaved as a propeptide — removed by sortase.

This sequence belongs to the serine-rich repeat protein (SRRP) family. Proteolytically cleaved by a metalloprotease. In terms of processing, glycosylated. It is probable that most of the Ser residues in SSR1 and SSR2 are O-GlcNAcylated. Sequential glycosylation by sugar transferases are able to generate complex sugar polymorphisms.

The protein localises to the secreted. Its subcellular location is the cell wall. Its function is as follows. Mediates binding to human platelets, possibly through a receptor-ligand interaction. Probably associated with virulence in endovascular infection. The polypeptide is Serine-rich adhesin for platelets (sraP) (Staphylococcus aureus (strain MSSA476)).